Here is an 85-residue protein sequence, read N- to C-terminus: UPF0386 protein RHECIAT_CH0001945 (85 aa).

The protein belongs to the UPF0386 family.

The protein is UPF0386 protein RHECIAT_CH0001945 of Rhizobium etli (strain CIAT 652).